The primary structure comprises 742 residues: Clamp-binding protein CrfC (742 aa).

The clamp-binding consensus stretch occupies residues 41–45; sequence QLALP. Residues 66-402 form the Dynamin-type G domain; sequence SRLEMVLAIV…LWEDSLFAQP (337 aa). A G1 motif region spans residues 76 to 83; that stretch reads GTMKAGKS. The interval 102 to 104 is G2 motif; sequence MTA. A G3 motif region spans residues 236 to 239; sequence DTPG. Residues 297 to 300 are G4 motif; it reads NKFD. The segment at 331–334 is G5 motif; it reads FPVS. A coiled-coil region spans residues 440-472; that stretch reads RAHGLNVACEQLRQNIHQIEESLQLLQLNQAQV.

Belongs to the TRAFAC class dynamin-like GTPase superfamily. Dynamin/Fzo/YdjA family. Forms homooligomers. Binds to the beta sliding clamp processivity factor (DnaN) in the presence and absence of DNA, may bind to the clamp itself as homodimers or trimers. Homooligomers may be able to bind more than 1 clamp complex.

The protein localises to the cytoplasm. Its function is as follows. Important for the colocalization of sister nascent DNA strands after replication fork passage during DNA replication, and for positioning and subsequent partitioning of sister chromosomes. Does not have GTPase activity on its own. This is Clamp-binding protein CrfC (crfC) from Escherichia coli (strain K12).